We begin with the raw amino-acid sequence, 509 residues long: DNA primase DnaG (509 aa).

The region spanning 167-253 is the Toprim domain; it reads DAIVVVEGRA…CVEDLARHEV (87 aa). Mg(2+)-binding residues include glutamate 173, aspartate 215, and aspartate 217. The disordered stretch occupies residues 267–411; sequence KQAASDDADP…ASTDEQPKTL (145 aa). Composition is skewed to low complexity over residues 313–331 and 383–402; these read PVSS…ETAA and ESTA…AAGA.

This sequence belongs to the archaeal DnaG primase family. As to quaternary structure, forms a ternary complex with MCM helicase and DNA. Mg(2+) serves as cofactor.

The enzyme catalyses ssDNA + n NTP = ssDNA/pppN(pN)n-1 hybrid + (n-1) diphosphate.. Its function is as follows. RNA polymerase that catalyzes the synthesis of short RNA molecules used as primers for DNA polymerase during DNA replication. This Natronomonas pharaonis (strain ATCC 35678 / DSM 2160 / CIP 103997 / JCM 8858 / NBRC 14720 / NCIMB 2260 / Gabara) (Halobacterium pharaonis) protein is DNA primase DnaG.